The sequence spans 294 residues: Undecaprenyl-diphosphatase (294 aa).

Transmembrane regions (helical) follow at residues 39-59, 93-113, 123-143, 197-217, 234-254, and 265-285; these read PGAAFTAIIQIGTELAVILYF, TQMGWFIIIGTLPILIAGLLF, NLWITVTVLIIFGILLWVVDA, VSFLMAIPAVFGAGILEAVSA, ATIAATIVAFVVGYVVIIGFL, and FAIYRIALAVVVALLLICGVL.

This sequence belongs to the UppP family.

The protein localises to the cell membrane. It catalyses the reaction di-trans,octa-cis-undecaprenyl diphosphate + H2O = di-trans,octa-cis-undecaprenyl phosphate + phosphate + H(+). Functionally, catalyzes the dephosphorylation of undecaprenyl diphosphate (UPP). Confers resistance to bacitracin. The polypeptide is Undecaprenyl-diphosphatase (Bifidobacterium adolescentis (strain ATCC 15703 / DSM 20083 / NCTC 11814 / E194a)).